Consider the following 373-residue polypeptide: Enoyl-[acyl-carrier-protein] reductase, mitochondrial (373 aa).

A mitochondrion-targeting transit peptide spans 1–53 (MLVSRRLTGARARAPLLASLLEAWCRQGRTTSSYSAFSEPSHVRALVYGNHGD). An N6-acetyllysine; alternate modification is found at lysine 61. The residue at position 61 (lysine 61) is an N6-succinyllysine; alternate. The active-site Proton donor is the tyrosine 94. NADP(+) contacts are provided by residues asparagine 167, 193–196 (NSGV), and 216–218 (RDR). Residues lysine 252 and lysine 267 each carry the N6-acetyllysine; alternate modification. Residues lysine 252 and lysine 267 each carry the N6-succinyllysine; alternate modification. NADP(+) contacts are provided by residues 285 to 288 (YGGM) and 310 to 312 (FWL). The residue at position 316 (lysine 316) is an N6-succinyllysine. Residue lysine 368 participates in NADP(+) binding.

This sequence belongs to the zinc-containing alcohol dehydrogenase family. Quinone oxidoreductase subfamily. Homodimer. In terms of assembly, interacts with PPARA in the nucleus and increases its activity.

It is found in the mitochondrion. It localises to the cytoplasm. The protein localises to the nucleus. The catalysed reaction is a 2,3-saturated acyl-[ACP] + NADP(+) = a (2E)-enoyl-[ACP] + NADPH + H(+). It catalyses the reaction (2E)-butenoyl-[ACP] + NADPH + H(+) = butanoyl-[ACP] + NADP(+). The enzyme catalyses (2E)-hexenoyl-[ACP] + NADPH + H(+) = hexanoyl-[ACP] + NADP(+). It carries out the reaction (2E)-octenoyl-[ACP] + NADPH + H(+) = octanoyl-[ACP] + NADP(+). The catalysed reaction is (2E)-decenoyl-[ACP] + NADPH + H(+) = decanoyl-[ACP] + NADP(+). It catalyses the reaction (2E)-dodecenoyl-[ACP] + NADPH + H(+) = dodecanoyl-[ACP] + NADP(+). The enzyme catalyses (2E)-tetradecenoyl-[ACP] + NADPH + H(+) = tetradecanoyl-[ACP] + NADP(+). It carries out the reaction (2E)-hexadecenoyl-[ACP] + NADPH + H(+) = hexadecanoyl-[ACP] + NADP(+). In terms of biological role, catalyzes the NADPH-dependent reduction of trans-2-enoyl thioesters in mitochondrial fatty acid synthesis (fatty acid synthesis type II). Fatty acid chain elongation in mitochondria uses acyl carrier protein (ACP) as an acyl group carrier, but the enzyme accepts both ACP and CoA thioesters as substrates in vitro. Displays a preference for medium-chain over short- and long-chain substrates. May provide the octanoyl chain used for lipoic acid biosynthesis, regulating protein lipoylation and mitochondrial respiratory activity particularly in Purkinje cells. Involved in iron homeostasis; affecting Fe-S cluster assembly and ceramide metabolism. Required for proper morphology and bioenergetic functions of mitochondria. Required for maintenance of neurons. This chain is Enoyl-[acyl-carrier-protein] reductase, mitochondrial (Mecr), found in Rattus norvegicus (Rat).